Reading from the N-terminus, the 162-residue chain is MHDSDKYFMKCAIFLAKISEMIGEVPVGAVLVFNNTIIGKGLNSSILNHDPTAHAEIKALRNGAKFLKNYRLLHTTLYVTLEPCIMCYGAIIHSRISRLVFGAKYKNLQKYICCKNHFFINKNFRKISITQEVLESECSNLLSSFFKRKRKIATKYFNNNII.

One can recognise a CMP/dCMP-type deaminase domain in the interval 3–115 (DSDKYFMKCA…KNLQKYICCK (113 aa)). His54 contacts Zn(2+). The active-site Proton donor is the Glu56. Zn(2+) is bound by residues Cys84 and Cys87.

Belongs to the cytidine and deoxycytidylate deaminase family. As to quaternary structure, homodimer. The cofactor is Zn(2+).

It catalyses the reaction adenosine(34) in tRNA + H2O + H(+) = inosine(34) in tRNA + NH4(+). Its function is as follows. Catalyzes the deamination of adenosine to inosine at the wobble position 34 of tRNA(Arg2). In Buchnera aphidicola subsp. Baizongia pistaciae (strain Bp), this protein is tRNA-specific adenosine deaminase.